A 793-amino-acid polypeptide reads, in one-letter code: Protein PAT1 homolog (793 aa).

Residues S200 and S208 each carry the phosphoserine modification. Disordered regions lie at residues 203–256 (PPGS…TGNR) and 292–312 (MLQQ…GSQN). Positions 219-242 (PYQSGGPQMGSPNFSPFPNLQPQL) are enriched in polar residues. Residues S342 and S343 each carry the phosphoserine modification. The interval 476–501 (RPLLEVDPPNSAKFGNAEHKPTDKPL) is disordered. The segment covering 491–501 (NAEHKPTDKPL) has biased composition (basic and acidic residues).

In terms of assembly, interacts with MPK4 and SUMM2. Phosphorylated at Ser-208 by MPK4 upon flg22 elicitation. Phosphorylated at Ser-200, Ser-342 and Ser-343 upon flg22 elicitation.

The protein resides in the cytoplasm. It localises to the P-body. Functionally, activator of mRNA decapping. Involved in mRNA decay via decapping. Involved in disease resistance in response to biotrophic and necrotrophic pathogens. Is part of a signaling pathway including MPK4 and the disease resistance protein SUMM2. The polypeptide is Protein PAT1 homolog (Arabidopsis thaliana (Mouse-ear cress)).